The following is a 295-amino-acid chain: Ribosomal protein L11 methyltransferase (295 aa).

S-adenosyl-L-methionine contacts are provided by T138, G161, D183, and N230.

This sequence belongs to the methyltransferase superfamily. PrmA family.

It localises to the cytoplasm. It catalyses the reaction L-lysyl-[protein] + 3 S-adenosyl-L-methionine = N(6),N(6),N(6)-trimethyl-L-lysyl-[protein] + 3 S-adenosyl-L-homocysteine + 3 H(+). Functionally, methylates ribosomal protein L11. This chain is Ribosomal protein L11 methyltransferase, found in Rhodopseudomonas palustris (strain BisB5).